Reading from the N-terminus, the 165-residue chain is uncharacterized protein (165 aa).

The chain crosses the membrane as a helical span at residues 10–27 (VSLTIVFVLFFSADVSLT).

The protein localises to the membrane. This is an uncharacterized protein from Saccharomyces cerevisiae (strain ATCC 204508 / S288c) (Baker's yeast).